The sequence spans 402 residues: Formate-dependent phosphoribosylglycinamide formyltransferase (402 aa).

Residues 23 to 24 (EL) and Glu-83 contribute to the N(1)-(5-phospho-beta-D-ribosyl)glycinamide site. Residues Arg-115, Lys-156, 196–199 (EEFV), and Glu-204 each bind ATP. An ATP-grasp domain is found at 120-316 (RLAAEKVGVP…EFAIHARAVL (197 aa)). Mg(2+)-binding residues include Glu-274 and Glu-287. Residues Asp-294, Lys-364, and 371-372 (RR) contribute to the N(1)-(5-phospho-beta-D-ribosyl)glycinamide site.

This sequence belongs to the PurK/PurT family. In terms of assembly, homodimer.

The enzyme catalyses N(1)-(5-phospho-beta-D-ribosyl)glycinamide + formate + ATP = N(2)-formyl-N(1)-(5-phospho-beta-D-ribosyl)glycinamide + ADP + phosphate + H(+). Its pathway is purine metabolism; IMP biosynthesis via de novo pathway; N(2)-formyl-N(1)-(5-phospho-D-ribosyl)glycinamide from N(1)-(5-phospho-D-ribosyl)glycinamide (formate route): step 1/1. Involved in the de novo purine biosynthesis. Catalyzes the transfer of formate to 5-phospho-ribosyl-glycinamide (GAR), producing 5-phospho-ribosyl-N-formylglycinamide (FGAR). Formate is provided by PurU via hydrolysis of 10-formyl-tetrahydrofolate. This is Formate-dependent phosphoribosylglycinamide formyltransferase from Ignicoccus hospitalis (strain KIN4/I / DSM 18386 / JCM 14125).